The following is a 602-amino-acid chain: Threonine--tRNA ligase (602 aa).

Residues 208–499 (DHRKLGTELK…LTEHCAGEFP (292 aa)) are catalytic. Zn(2+) is bound by residues C300, H351, and H476.

The protein belongs to the class-II aminoacyl-tRNA synthetase family. Homodimer. The cofactor is Zn(2+).

Its subcellular location is the cytoplasm. The enzyme catalyses tRNA(Thr) + L-threonine + ATP = L-threonyl-tRNA(Thr) + AMP + diphosphate + H(+). Its function is as follows. Catalyzes the attachment of threonine to tRNA(Thr) in a two-step reaction: L-threonine is first activated by ATP to form Thr-AMP and then transferred to the acceptor end of tRNA(Thr). Also edits incorrectly charged L-seryl-tRNA(Thr). This Campylobacter jejuni (strain RM1221) protein is Threonine--tRNA ligase.